Consider the following 345-residue polypeptide: MFQQLKQSKDFLALTLAHPQYLTESFEFDLANQVHVEVWDTGVIMFEPLGVKHTKDLVLSCAVHGNETAPIELCNDLMTQLLDEQLVLKQRVLFLIGNPPAIHNGTRFIDENLNRLFNGAHSRGEGLCNPERVRAQKLEQYVDKFFSAHSGERHRMHYDLHTAIRASKHEKFAIYPYRGNRKYSKEQIMFLESCGVNTILFHHEPTTTFSYFSSENYHADAFTIELGKVFPMGQNDMTRFIAMKEMLTLLMCGEELKLPSFDMKRLNLYQVCRSVNKRYDDFEFTFTNDVENFTAFPRGYTLAKEGGFEVKVEHEFESIVFPNAKVPVGQRTVLCLKSADESRLD.

Zn(2+)-binding residues include histidine 64, glutamate 67, and histidine 161. Glutamate 225 is a catalytic residue.

Belongs to the AspA/AstE family. Succinylglutamate desuccinylase subfamily. The cofactor is Zn(2+).

The catalysed reaction is N-succinyl-L-glutamate + H2O = L-glutamate + succinate. Its pathway is amino-acid degradation; L-arginine degradation via AST pathway; L-glutamate and succinate from L-arginine: step 5/5. Functionally, transforms N(2)-succinylglutamate into succinate and glutamate. This is Succinylglutamate desuccinylase from Shewanella pealeana (strain ATCC 700345 / ANG-SQ1).